The sequence spans 1233 residues: NACHT, LRR and PYD domains-containing protein 1b allele 1 (1233 aa).

The segment at 1–22 (MEESPPKQKSNTKVAQHEGQQD) is disordered. In terms of domain architecture, NACHT spans 126–435 (QLVIIEGAAG…EFFAAISCIL (310 aa)). Position 132–139 (132–139 (GAAGIGKS)) interacts with ATP. LRR repeat units lie at residues 627-647 (NLEGLDLSGNSLRYSVVQSLC) and 684-704 (SLTELYLQLNDLGDDGVRMLC). Residues 850–983 (FWGPIGPVAT…GYTVLKNPSF (134 aa)) are ZU5. Residues 850-1133 (FWGPIGPVAT…LRPALPRIAQ (284 aa)) form the FIIND domain. The segment at 984-1133 (SPMGVVLRII…LRPALPRIAQ (150 aa)) is UPA. One can recognise a CARD domain in the interval 1143 to 1226 (HFMDQHREQL…HLVMDLLEKS (84 aa)).

Belongs to the NLRP family. In terms of assembly, interacts with DPP9; leading to inhibit activation of the inflammasome. DPP9 acts via formation of a ternary complex, composed of a DPP9 homodimer, one full-length Nlrp1b protein, and one cleaved C-terminus of Nlrp1b (NACHT, LRR and PYD domains-containing protein 1b, C-terminus). Interacts with DPP8; leading to inhibit activation of the inflammasome, probably via formation of a ternary complex with DPP8. Interacts (via LRR repeats) with BCL2 and BCL2L1 (via the loop between motifs BH4 and BH3). Interacts with NOD2; this interaction may increase IL1B release. Interacts with EIF2AK2/PKR; this interaction requires EIF2AK2 activity, is accompanied by EIF2AK2 autophosphorylation and promotes inflammasome assembly in response to B.anthracis lethal toxin. Interacts with MEFV; this interaction targets Nlrp1b to degradation by autophagy, hence preventing excessive IL1B- and IL18-mediated inflammation. As to quaternary structure, interacts with the C-terminal part of Nlrp1b (NACHT, LRR and PYD domains-containing protein 1b, C-terminus) in absence of pathogens and other damage-associated signals. Interacts with the N-terminal part of Nlrp1b (NACHT, LRR and PYD domains-containing protein 1b, N-terminus) in absence of pathogens and other damage-associated signals. Homomultimer; forms the Nlrp1b inflammasome polymeric complex, a filament composed of homopolymers of this form in response to pathogens and other damage-associated signals. The Nlrp1b inflammasome polymeric complex directly recruits pro-caspase-1 (proCASP1) independently of PYCARD/ASC. Interacts (via CARD domain) with CASP1 (via CARD domain); leading to CASP1 activation. Post-translationally, autocatalytically cleaved. Autocatalytic cleavage in FIIND region occurs constitutively, prior to activation signals, and is required for inflammasome activity (IL1B release), possibly by facilitating CASP1 binding. Both N- and C-terminal parts remain associated non-covalently. In terms of processing, ubiquitinated by UBR2, a component of the N-end rule pathway in response to pathogens and other damage-associated signals, leading to its degradation by the proteasome and subsequent release of the cleaved C-terminal part of the protein (NACHT, LRR and PYD domains-containing protein 1b, C-terminus), which polymerizes and forms the Nlrp1b inflammasome. (Microbial infection) Cleavage by B.anthracis lethal toxin (LT) endopeptidase promotes ubiquitination and degradation of the N-terminal part, releasing the cleaved C-terminal part of the protein (NACHT, LRR and PYD domains-containing protein 1b, C-terminus), which polymerizes and forms the Nlrp1b inflammasome. Post-translationally, (Microbial infection) Ubiquitinated by S.flexneri IpaH7.8, leading to its degradation by the proteasome and subsequent release of the cleaved C-terminal part of the protein (NACHT, LRR and PYD domains-containing protein 1b, C-terminus), which polymerizes and forms the Nlrp1b inflammasome. In terms of tissue distribution, widely expressed, including in macrophages.

Its subcellular location is the cytoplasm. The protein resides in the cytosol. The protein localises to the membrane. It is found in the inflammasome. Its activity is regulated as follows. Activated by cleavage by B.anthracis lethal toxin (LT) endopeptidase: cleavage by LT promotes ubiquitination and degradation of the N-terminal part, releasing the cleaved C-terminal part of the protein (NACHT, LRR and PYD domains-containing protein 1b, C-terminus), which polymerizes and forms the Nlrp1b inflammasome. Activated by S.flexneri IpaH7.8, an E3 ubiquitin ligase that mediates ubiquitination and degradation of the N-terminal part, releasing the cleaved C-terminal part of the protein, which polymerizes and forms the Nlrp1b inflammasome. Nlrp1b inflammasome is inhibited by DPP8 and DPP9, which sequester the C-terminal fragment of Nlrp1b (NACHT, LRR and PYD domains-containing protein 1b, C-terminus) in a ternary complex, thereby preventing Nlrp1b oligomerization and activation. Nlrp1b inflammasome is activated by Val-boroPro (Talabostat, PT-100), an inhibitor of dipeptidyl peptidases DPP8 and DPP9. Val-boroPro relieves inhibition of DPP8 and/or DPP9 by promoting disruption of the ternary complex, releasing its C-terminal part from autoinhibition. Activated by metabolic inhibitors, such as 2-deoxy-D-glucose and sodium azide, by nutrient deprivation and hypoxia, possibly due to a decrease in cytosolic ATP. Also activated by Toxoplasma gondii. Not activated by muramyl dipeptide, nor by full-length bacterial peptidoglycan. Contrary to its human ortholog, not activated by positive-strand RNA virus such as Semliki Forrest virus or long dsRNA. Its function is as follows. Acts as the sensor component of the Nlrp1b inflammasome, which mediates inflammasome activation in response to various pathogen-associated signals, leading to subsequent pyroptosis. Inflammasomes are supramolecular complexes that assemble in the cytosol in response to pathogens and other damage-associated signals and play critical roles in innate immunity and inflammation. Acts as a recognition receptor (PRR): recognizes specific pathogens and other damage-associated signals, such as B.anthracis lethal toxin (LT) or Val-boroPro inhibitor, and mediates the formation of the inflammasome polymeric complex. In response to pathogen-associated signals, the N-terminal part of Nlrp1b is degraded by the proteasome, releasing the cleaved C-terminal part of the protein (NACHT, LRR and PYD domains-containing protein 1b, C-terminus), which polymerizes to initiate the formation of the inflammasome complex: the inflammasome directly recruits pro-caspase-1 (proCASP1) independently of PYCARD/ASC and promotes caspase-1 (CASP1) activation, which subsequently cleaves and activates inflammatory cytokines IL1B and IL18 and gasdermin-D (GSDMD), leading to pyroptosis. In the absence of GSDMD expression, the Nlrp1b inflammasome is able to recruit and activate CASP8, leading to activation of gasdermin-E (GSDME). Activation of Nlrp1b inflammasome is also required for HMGB1 secretion; the active cytokines and HMGB1 stimulate inflammatory responses. Primary mediator of macrophage susceptibility to B.anthracis LT: in response to B.anthracis infection, macrophages and dendritic cells release IL1B and undergo pyroptosis. This early inflammatory response to the toxin increases resistance to infection by B.anthracis spores. In terms of biological role, constitutes the precursor of the Nlrp1b inflammasome, which mediates autoproteolytic processing within the FIIND domain to generate the N-terminal and C-terminal parts, which are associated non-covalently in absence of pathogens and other damage-associated signals. Functionally, regulatory part that prevents formation of the Nlrp1b inflammasome: in absence of pathogens and other damage-associated signals, interacts with the C-terminal part of Nlrp1b (NACHT, LRR and PYD domains-containing protein 1b, C-terminus), preventing activation of the Nlrp1b inflammasome. In response to pathogen-associated signals, this part is ubiquitinated by the N-end rule pathway and degraded by the proteasome, releasing the cleaved C-terminal part of the protein, which polymerizes and forms the Nlrp1b inflammasome. Constitutes the active part of the Nlrp1b inflammasome. In absence of pathogens and other damage-associated signals, interacts with the N-terminal part of Nlrp1b (NACHT, LRR and PYD domains-containing protein 1b, N-terminus), preventing activation of the Nlrp1b inflammasome. In response to pathogen-associated signals, the N-terminal part of Nlrp1b is degraded by the proteasome, releasing this form, which polymerizes to form the Nlrp1b inflammasome complex: the Nlrp1b inflammasome complex then directly recruits pro-caspase-1 (proCASP1) and promotes caspase-1 (CASP1) activation, leading to gasdermin-D (GSDMD) cleavage and subsequent pyroptosis. The sequence is that of NACHT, LRR and PYD domains-containing protein 1b allele 1 from Mus musculus (Mouse).